We begin with the raw amino-acid sequence, 152 residues long: Small ribosomal subunit protein bS16 (152 aa).

The tract at residues W84–E152 is disordered. A compositionally biased stretch (basic and acidic residues) spans P97–K123. A compositionally biased stretch (low complexity) spans A124–A144.

This sequence belongs to the bacterial ribosomal protein bS16 family.

The chain is Small ribosomal subunit protein bS16 from Maricaulis maris (strain MCS10) (Caulobacter maris).